A 355-amino-acid polypeptide reads, in one-letter code: uncharacterized protein (355 aa).

Residues 1–49 (MPMTVVSGRFSTALLPTCFSLSRLHSVKYAAQRRVVFVSRSAHASSASV) constitute a chloroplast transit peptide.

It belongs to the methyltransferase superfamily.

The protein localises to the plastid. The protein resides in the chloroplast. It is found in the plastoglobule. This is an uncharacterized protein from Arabidopsis thaliana (Mouse-ear cress).